Consider the following 186-residue polypeptide: Large ribosomal subunit protein uL10 (186 aa).

This sequence belongs to the universal ribosomal protein uL10 family. In terms of assembly, part of the ribosomal stalk of the 50S ribosomal subunit. The N-terminus interacts with L11 and the large rRNA to form the base of the stalk. The C-terminus forms an elongated spine to which L12 dimers bind in a sequential fashion forming a multimeric L10(L12)X complex.

Functionally, forms part of the ribosomal stalk, playing a central role in the interaction of the ribosome with GTP-bound translation factors. The protein is Large ribosomal subunit protein uL10 (rplJ) of Streptomyces virginiae (Streptomyces cinnamonensis).